The following is a 172-amino-acid chain: DKKLDADISPKPTIFLPSVAETNLHKTGTYLCVLEKFFPDVIRVYWKEKKGNTILDSQEGDMLKTNDTYMKFSWLTVPERSMGKEHRCIVKHENNKGGADQEIFFPTIKKVAVSTKPTTCWQDKNDVLQLQFTITSAYYTYLLLLLKSVIYLAIISFSLLRRTSVCCNEKKS.

A c region region spans residues 1 to 140; sequence DKKLDADISP…QFTITSAYYT (140 aa). Residues 141-160 form a helical membrane-spanning segment; it reads YLLLLLKSVIYLAIISFSLL. Residues 161-172 lie on the Cytoplasmic side of the membrane; sequence RRTSVCCNEKKS.

It localises to the membrane. This Mus musculus (Mouse) protein is T-cell receptor gamma chain C region C7.5.